Here is a 65-residue protein sequence, read N- to C-terminus: Toxin VmKTx1 (65 aa).

Residues 1–21 form the signal peptide; sequence MKTSCLLTILLLSFLVAVAVA. Residues 22 to 28 constitute a propeptide that is removed on maturation; that stretch reads EGERSAR. Cystine bridges form between cysteine 34–cysteine 54, cysteine 40–cysteine 59, cysteine 44–cysteine 61, and cysteine 49–cysteine 64. Cysteine 64 is modified (cysteine amide).

Belongs to the short scorpion toxin superfamily. Potassium channel inhibitor family. Alpha-KTx 23 subfamily. In terms of tissue distribution, expressed by the venom gland.

It is found in the secreted. Voltage-gated potassium channel inhibitor. Selectively and reversibly binds (Kd=0.77 nM) and blocks hKv1.3/KCNA3 potassium channels of human T-lymphocytes. Also shows a very weak effect on hKv1.2/KCNA2 (Kd=7.1 uM). Also reduces the fraction of CD40L expressing T cells that are stimulated by alphaCD3/alphaCD28. The polypeptide is Toxin VmKTx1 (Vaejovis mexicanus smithi (Mexican scorpion)).